The primary structure comprises 126 residues: Large-conductance mechanosensitive channel (126 aa).

A run of 2 helical transmembrane segments spans residues 8–28 (FAMR…AAFT) and 70–90 (IQQI…VKVI).

It belongs to the MscL family. As to quaternary structure, homopentamer.

Its subcellular location is the cell membrane. Channel that opens in response to stretch forces in the membrane lipid bilayer. May participate in the regulation of osmotic pressure changes within the cell. The protein is Large-conductance mechanosensitive channel of Exiguobacterium sp. (strain ATCC BAA-1283 / AT1b).